The primary structure comprises 506 residues: Lysine--tRNA ligase (506 aa).

Positions 416 and 423 each coordinate Mg(2+).

Belongs to the class-II aminoacyl-tRNA synthetase family. As to quaternary structure, homodimer. Requires Mg(2+) as cofactor.

The protein localises to the cytoplasm. The enzyme catalyses tRNA(Lys) + L-lysine + ATP = L-lysyl-tRNA(Lys) + AMP + diphosphate. This chain is Lysine--tRNA ligase, found in Xylella fastidiosa (strain M23).